The primary structure comprises 152 residues: Transcriptional regulator MraZ (152 aa).

SpoVT-AbrB domains follow at residues 5–52 (AQAI…PLKE) and 81–124 (ATEC…SETE).

It belongs to the MraZ family. Forms oligomers.

The protein resides in the cytoplasm. Its subcellular location is the nucleoid. The protein is Transcriptional regulator MraZ of Mannheimia succiniciproducens (strain KCTC 0769BP / MBEL55E).